We begin with the raw amino-acid sequence, 58 residues long: Ribosome modulation factor (58 aa).

The protein belongs to the ribosome modulation factor family.

The protein localises to the cytoplasm. In terms of biological role, during stationary phase, converts 70S ribosomes to an inactive dimeric form (100S ribosomes). This is Ribosome modulation factor from Tolumonas auensis (strain DSM 9187 / NBRC 110442 / TA 4).